Reading from the N-terminus, the 323-residue chain is MAVPKGSLWLRAQLGIPPLLLLAMALAGGSGTASAEAFDSVLGDTASCHRACQLTYPLHTYPKEEELYACQRGCRLFSICQFVDDGIDLNRTKLECESACTEAYSQSDEQYACHLGCQNQLPYAELRQEQLMSLMPKMHLLFPLTLVRSFWSDMVDSAQSFITSSWTFYLQADDGKIVIFQSKPEIQYAPQLEQEPTNLKDSSLSKMSYLQMRSSQAHRNYLEDGESDGFLRCLSLNSGWILTVTLVLSVMVLLWICCATVATAVEQYVPSEKLSIYGDLEFMNEQKLNRYPASSLVVVRSKAEDHEEAGPLPAKVNLAHSEI.

The N-terminal stretch at 1-35 (MAVPKGSLWLRAQLGIPPLLLLAMALAGGSGTASA) is a signal peptide. The Extracellular portion of the chain corresponds to 36–238 (EAFDSVLGDT…GFLRCLSLNS (203 aa)). A glycan (N-linked (GlcNAc...) asparagine) is linked at Asn-90. A helical transmembrane segment spans residues 239 to 259 (GWILTVTLVLSVMVLLWICCA). Over 260–323 (TVATAVEQYV…AKVNLAHSEI (64 aa)) the chain is Cytoplasmic. The short motif at 263 to 281 (TAVEQYVPSEKLSIYGDLE) is the ATG16L1-binding motif element.

It belongs to the TMEM59 family. Interacts with ATG16L1 (via WD repeats). In terms of processing, N-glycosylated.

The protein localises to the late endosome membrane. It is found in the lysosome membrane. Its subcellular location is the cell membrane. The protein resides in the golgi apparatus membrane. Its function is as follows. Acts as a regulator of autophagy in response to S.aureus infection by promoting activation of LC3 (MAP1LC3A, MAP1LC3B or MAP1LC3C). Acts by interacting with ATG16L1, leading to promote a functional complex between LC3 and ATG16L1 and promoting LC3 lipidation and subsequent activation of autophagy. Modulates the O-glycosylation and complex N-glycosylation steps occurring during the Golgi maturation of several proteins such as APP, BACE1, SEAP or PRNP. Inhibits APP transport to the cell surface and further shedding. This chain is Transmembrane protein 59 (TMEM59), found in Bos taurus (Bovine).